The chain runs to 447 residues: Tektin-4 (447 aa).

Coiled coils occupy residues 114-143 (KSEL…RALD), 324-348 (KILS…DKEA), and 375-423 (FRLM…TNSL).

The protein belongs to the tektin family. As to quaternary structure, microtubule inner protein component of sperm flagellar doublet microtubules. Ubiquitinated, leading to its degradation. Deubiquitinated by USP16, promoting its stability.

It localises to the cytoplasm. The protein resides in the cytoskeleton. The protein localises to the cilium axoneme. It is found in the flagellum axoneme. Its function is as follows. Microtubule inner protein (MIP) part of the dynein-decorated doublet microtubules (DMTs) in cilia and flagellar axoneme. Forms filamentous polymers in the walls of ciliary and flagellar microtubules. Contributes to normal sperm motility. The polypeptide is Tektin-4 (Tekt4) (Rattus norvegicus (Rat)).